Reading from the N-terminus, the 396-residue chain is Anhydro-N-acetylmuramic acid kinase (396 aa).

An ATP-binding site is contributed by 21–28; the sequence is GTSADGID.

The protein belongs to the anhydro-N-acetylmuramic acid kinase family.

It catalyses the reaction 1,6-anhydro-N-acetyl-beta-muramate + ATP + H2O = N-acetyl-D-muramate 6-phosphate + ADP + H(+). It functions in the pathway amino-sugar metabolism; 1,6-anhydro-N-acetylmuramate degradation. The protein operates within cell wall biogenesis; peptidoglycan recycling. Functionally, catalyzes the specific phosphorylation of 1,6-anhydro-N-acetylmuramic acid (anhMurNAc) with the simultaneous cleavage of the 1,6-anhydro ring, generating MurNAc-6-P. Is required for the utilization of anhMurNAc either imported from the medium or derived from its own cell wall murein, and thus plays a role in cell wall recycling. This Caldanaerobacter subterraneus subsp. tengcongensis (strain DSM 15242 / JCM 11007 / NBRC 100824 / MB4) (Thermoanaerobacter tengcongensis) protein is Anhydro-N-acetylmuramic acid kinase.